A 317-amino-acid chain; its full sequence is MAIGNWTEISEFILMSFSSLPTEIQSLLFLTFLTIYLVTLKGNSLIILVTLADPMLHSPMYFFLRNLSFLEIGFNLVIVPKMLGTLLAQDTTISFLGCATQMYFFFFFGVAECFLLATMAYDRYVAICSPLHYPVIMNQRTRAKLAAASWFPGFPVATVQTTWLFSFPFCGTNKVNHFFCDSPPVLKLVCADTALFEIYAIVGTILVVMIPCLLILCSYTRIAAAILKIPSAKGKHKAFSTCSSHLLVVSLFYISSSLTYFWPKSNNSPESKKLLSLSYTVVTPMLNPIIYSLRNSEVKNALSRTFHKVLALRNCIP.

The Extracellular segment spans residues Met-1–Ser-26. Asn-5 is a glycosylation site (N-linked (GlcNAc...) asparagine). Residues Leu-27–Ile-47 form a helical membrane-spanning segment. At Leu-48 to Met-55 the chain is on the cytoplasmic side. The chain crosses the membrane as a helical span at residues Leu-56 to Leu-76. The Extracellular portion of the chain corresponds to Val-77–Thr-100. A disulfide bridge connects residues Cys-98 and Cys-190. Residues Gln-101–Tyr-121 form a helical membrane-spanning segment. Residues Asp-122–Arg-140 are Cytoplasmic-facing. The chain crosses the membrane as a helical span at residues Thr-141–Thr-161. Residues Thr-162–Ile-198 lie on the Extracellular side of the membrane. A helical membrane pass occupies residues Tyr-199–Ser-218. The Cytoplasmic segment spans residues Tyr-219–Ala-238. A helical transmembrane segment spans residues Phe-239–Thr-259. The Extracellular portion of the chain corresponds to Tyr-260–Lys-272. Residues Lys-273–Leu-293 traverse the membrane as a helical segment. At Arg-294–Pro-317 the chain is on the cytoplasmic side.

It belongs to the G-protein coupled receptor 1 family. Expressed in the tongue.

It localises to the cell membrane. Its function is as follows. Odorant receptor (Potential). May be involved in taste perception. This Homo sapiens (Human) protein is Olfactory receptor 10A5 (OR10A5).